Here is a 372-residue protein sequence, read N- to C-terminus: Alginate lyase (372 aa).

The signal sequence occupies residues 1–22 (MKTRLALPCLLGSLLLSSAVHA). Substrate contacts are provided by residues 61-62 (SK), 134-135 (HT), and Tyr-252.

This sequence belongs to the polysaccharide lyase 5 family.

The protein localises to the periplasm. It carries out the reaction Eliminative cleavage of alginate to give oligosaccharides with 4-deoxy-alpha-L-erythro-hex-4-enuronosyl groups at their non-reducing ends and beta-D-mannuronate at their reducing end.. Monovalent cations such as potassium and sodium enhance activity, as well as a combined action of these cations with magnesium. However, other cations like calcium, cobalt, manganese and zinc, or the presence of EDTA, do not affect the enzymatic activity. Catalyzes the depolymerization of alginate by cleaving the beta-1,4 glycosidic bond between two adjacent sugar residues via a beta-elimination mechanism. Degrades deacetylated polymannuronate alginate more efficiently than non-deacetylated polyM. Is able to degrade its own alginate, but at a lower efficiency than that produced from M.pyriferia and P.aeruginosa. May serve to degrade mislocalized alginate that is trapped in the periplasmic space. The polypeptide is Alginate lyase (Azotobacter chroococcum mcd 1).